The chain runs to 29 residues: U1-pseudomyrmecitoxin-Pt1 subunit SS1 (29 aa).

Belongs to the myrmexin family. As to quaternary structure, heterodimer composed of subunit SS1 and subunit LS1 (U1-PSDTX-Pt1b), and heterodimer composed of subunit SS1 and LS2 (U1-PSDTX-Pt1a); disulfide-linked. Expressed by the venom gland.

The protein resides in the secreted. In terms of biological role, this heterodimer may have anti-inflammatory properties, since the myrmexin complex (composed of 6 SS-LS heterodimers) inhibits carrageenin-induced edema in a dose-dependent manner (after subcutaneous injection into rats). This is U1-pseudomyrmecitoxin-Pt1 subunit SS1 from Pseudomyrmex triplarinus (Ant).